The primary structure comprises 172 residues: Stellate protein CG33239/CG33241 (172 aa).

Belongs to the casein kinase 2 subunit beta family. As to quaternary structure, interacts in vitro with the casein kinase 2 alpha subunit (CkII-alpha). The relevance of such interaction is however unclear in vivo. In terms of tissue distribution, probably not expressed in wild-type flies. In males lacking the Y chromosome, it is testis-specific and constitutes the main component of star-shaped crystals.

Its function is as follows. Unknown. In males lacking the Y chromosome, its strong overexpression leads to the appearance of proteinaceous star-shaped crystals in the primary spermatocytes causing meiotic drive, possibly by interfering with normal casein kinase 2 activity. The chain is Stellate protein CG33239/CG33241 (Ste:CG33239) from Drosophila melanogaster (Fruit fly).